Consider the following 228-residue polypeptide: PKHD-type hydroxylase Rmet_3078 (228 aa).

The region spanning 80-180 (IVYPPMFNRY…RVGCFFWIQS (101 aa)) is the Fe2OG dioxygenase domain. Histidine 98, aspartate 100, and histidine 161 together coordinate Fe cation. Position 171 (arginine 171) interacts with 2-oxoglutarate.

Requires Fe(2+) as cofactor. L-ascorbate serves as cofactor.

This is PKHD-type hydroxylase Rmet_3078 from Cupriavidus metallidurans (strain ATCC 43123 / DSM 2839 / NBRC 102507 / CH34) (Ralstonia metallidurans).